A 62-amino-acid polypeptide reads, in one-letter code: MTIAFELSVFALITISFLLVIGVPVVLASPDGWSSSKNIVFSGASLWIGLVFLVGILNSLIS.

The next 2 helical transmembrane spans lie at 8–28 (SVFA…VVLA) and 41–61 (FSGA…NSLI).

This sequence belongs to the PsbZ family. As to quaternary structure, PSII is composed of 1 copy each of membrane proteins PsbA, PsbB, PsbC, PsbD, PsbE, PsbF, PsbH, PsbI, PsbJ, PsbK, PsbL, PsbM, PsbT, PsbY, PsbZ, Psb30/Ycf12, at least 3 peripheral proteins of the oxygen-evolving complex and a large number of cofactors. It forms dimeric complexes.

The protein resides in the plastid. The protein localises to the chloroplast thylakoid membrane. In terms of biological role, may control the interaction of photosystem II (PSII) cores with the light-harvesting antenna, regulates electron flow through the 2 photosystem reaction centers. PSII is a light-driven water plastoquinone oxidoreductase, using light energy to abstract electrons from H(2)O, generating a proton gradient subsequently used for ATP formation. This chain is Photosystem II reaction center protein Z, found in Psilotum nudum (Whisk fern).